We begin with the raw amino-acid sequence, 250 residues long: Developmental protein SEPALLATA 2 (250 aa).

Residues 3-57 (RGRVELKRIENKINRQVTFAKRRNGLLKKAYELSVLCDAEVSLIVFSNRGKLYEF) form the MADS-box domain. Positions 85 to 150 (AKELENSYRE…CIKTQYMLDQ (66 aa)) form a coiled coil. A K-box domain is found at 88 to 178 (LENSYREYLK…SMKLEDMIGV (91 aa)).

In terms of assembly, heterodimer with AGAMOUS capable of binding to CArG-box sequences. Interacts with TT16/AGL32.

The protein resides in the nucleus. Its function is as follows. Probable transcription factor. Functions with SEPALLATA1/AGL2 and SEPALLATA3/AGL9 to ensure proper development of petals, stamens and carpels and to prevent the indeterminate growth of the flower meristem. Forms a heterodimer via the K-box domain with AG, that could be involved in genes regulation during floral meristem development. The chain is Developmental protein SEPALLATA 2 (SEP2) from Arabidopsis thaliana (Mouse-ear cress).